The sequence spans 242 residues: uncharacterized protein (242 aa).

3 residues coordinate S-adenosyl-L-methionine: glycine 198, isoleucine 218, and leucine 227.

Belongs to the class IV-like SAM-binding methyltransferase superfamily. RNA methyltransferase TrmH family.

This is an uncharacterized protein from Mycoplasma genitalium (strain ATCC 33530 / DSM 19775 / NCTC 10195 / G37) (Mycoplasmoides genitalium).